The sequence spans 522 residues: Berberine bridge enzyme-like Cyn d 4 (522 aa).

A signal peptide spans 1 to 25; sequence MARSRAFAFALLICAVAASCHVALS. Residues cysteine 41 and cysteine 98 are joined by a disulfide bond. In terms of domain architecture, FAD-binding PCMH-type spans 76-252; the sequence is KTVKPLYIIT…ASWQVKLLPV (177 aa). Asparagine 88 carries an N-linked (GlcNAc...) asparagine glycan. Residues 108-114, serine 119, serine 152, 176-177, 181-185, phenylalanine 191, glutamate 237, and valine 242 each bind FAD; these read VRSGGHD, VC, and GVGGH. The 6-(S-cysteinyl)-8alpha-(pros-histidyl)-FAD (His-Cys) cross-link spans 113–177; that stretch reads HDYEGLSYRS…PKLGFPAGVC (65 aa). Residues cysteine 308 and cysteine 329 are joined by a disulfide bond. N-linked (GlcNAc...) asparagine glycans are attached at residues asparagine 325 and asparagine 354. 461–465 is a binding site for FAD; sequence YVNYR. N-linked (GlcNAc...) asparagine glycosylation occurs at asparagine 477.

This sequence belongs to the oxygen-dependent FAD-linked oxidoreductase family. As to quaternary structure, monomer. Requires FAD as cofactor. In terms of processing, the FAD cofactor is bound via a bicovalent 6-S-cysteinyl, 8alpha-N1-histidyl FAD linkage. The N-terminus is blocked. Post-translationally, glycosylated. N-glycosylated. Contains fucose, N-acetylglucosamine, and mannose as main carbohydrates (in a ratio of approximately 3:2:1), and a minute amount of xylose. The two most abundant oligosaccharides are Fuc(1)GlcNAc(2)Man(3) and Fuc(1)GlcNAc(2)Man(2), together comprising about 80% of the total carbohydrate content. They are structurally unusual in having a L-Fuc alpha-(1,3)-linked to Asn-linked GlcNAc without a Xyl beta-(1,2)-linked to the branching Man. The other oligosaccharides make up only 9% of the total carbohydrate content and are characterized by the presence of Xyl beta-(1,2)-linked to the branching Man. Expressed in pollen (at protein level).

The sequence is that of Berberine bridge enzyme-like Cyn d 4 from Cynodon dactylon (Bermuda grass).